We begin with the raw amino-acid sequence, 96 residues long: UPF0251 protein VPA0321 (96 aa).

The protein belongs to the UPF0251 family.

In Vibrio parahaemolyticus serotype O3:K6 (strain RIMD 2210633), this protein is UPF0251 protein VPA0321.